We begin with the raw amino-acid sequence, 421 residues long: Ribosomal RNA large subunit methyltransferase G (421 aa).

The disordered stretch occupies residues 389–421 (EPELEQESDLNSKLDANTEVPHPQSALYGKPKA).

It belongs to the methyltransferase superfamily. RlmG family.

Its subcellular location is the cytoplasm. It catalyses the reaction guanosine(1835) in 23S rRNA + S-adenosyl-L-methionine = N(2)-methylguanosine(1835) in 23S rRNA + S-adenosyl-L-homocysteine + H(+). Functionally, specifically methylates the guanine in position 1835 (m2G1835) of 23S rRNA. The protein is Ribosomal RNA large subunit methyltransferase G of Shewanella halifaxensis (strain HAW-EB4).